Here is a 321-residue protein sequence, read N- to C-terminus: Lipoyl synthase (321 aa).

Positions 68, 73, 79, 94, 98, 101, and 308 each coordinate [4Fe-4S] cluster. One can recognise a Radical SAM core domain in the interval 80–297; the sequence is FNHGTATFMI…KAAAMDMGFT (218 aa).

The protein belongs to the radical SAM superfamily. Lipoyl synthase family. [4Fe-4S] cluster is required as a cofactor.

It is found in the cytoplasm. It catalyses the reaction [[Fe-S] cluster scaffold protein carrying a second [4Fe-4S](2+) cluster] + N(6)-octanoyl-L-lysyl-[protein] + 2 oxidized [2Fe-2S]-[ferredoxin] + 2 S-adenosyl-L-methionine + 4 H(+) = [[Fe-S] cluster scaffold protein] + N(6)-[(R)-dihydrolipoyl]-L-lysyl-[protein] + 4 Fe(3+) + 2 hydrogen sulfide + 2 5'-deoxyadenosine + 2 L-methionine + 2 reduced [2Fe-2S]-[ferredoxin]. The protein operates within protein modification; protein lipoylation via endogenous pathway; protein N(6)-(lipoyl)lysine from octanoyl-[acyl-carrier-protein]: step 2/2. Catalyzes the radical-mediated insertion of two sulfur atoms into the C-6 and C-8 positions of the octanoyl moiety bound to the lipoyl domains of lipoate-dependent enzymes, thereby converting the octanoylated domains into lipoylated derivatives. The sequence is that of Lipoyl synthase from Erwinia tasmaniensis (strain DSM 17950 / CFBP 7177 / CIP 109463 / NCPPB 4357 / Et1/99).